The sequence spans 97 residues: YcgL domain-containing protein PA14_47450 (97 aa).

In terms of domain architecture, YcgL spans 3–87 (RICSVYKSPR…GEEEYIEHLP (85 aa)).

The protein is YcgL domain-containing protein PA14_47450 of Pseudomonas aeruginosa (strain UCBPP-PA14).